Here is a 160-residue protein sequence, read N- to C-terminus: Transcription elongation factor GreA (160 aa).

Residues 4–70 (QKQYPMTQEG…IEQDIQRIEH (67 aa)) adopt a coiled-coil conformation.

Belongs to the GreA/GreB family.

In terms of biological role, necessary for efficient RNA polymerase transcription elongation past template-encoded arresting sites. The arresting sites in DNA have the property of trapping a certain fraction of elongating RNA polymerases that pass through, resulting in locked ternary complexes. Cleavage of the nascent transcript by cleavage factors such as GreA or GreB allows the resumption of elongation from the new 3'terminus. GreA releases sequences of 2 to 3 nucleotides. The sequence is that of Transcription elongation factor GreA from Staphylococcus carnosus (strain TM300).